The chain runs to 242 residues: Uridylate kinase (242 aa).

Lys-16 to Gly-19 is a binding site for ATP. Residue Gly-58 coordinates UMP. 2 residues coordinate ATP: Gly-59 and Arg-63. UMP is bound by residues Asp-78 and Thr-139 to Thr-146. ATP contacts are provided by Thr-166, Gln-167, Tyr-172, and Asp-175.

Belongs to the UMP kinase family. Homohexamer.

It is found in the cytoplasm. The enzyme catalyses UMP + ATP = UDP + ADP. It functions in the pathway pyrimidine metabolism; CTP biosynthesis via de novo pathway; UDP from UMP (UMPK route): step 1/1. Inhibited by UTP. In terms of biological role, catalyzes the reversible phosphorylation of UMP to UDP. The protein is Uridylate kinase of Rickettsia prowazekii (strain Madrid E).